A 110-amino-acid polypeptide reads, in one-letter code: MPELKTVGLFFITAIAEIIGCYLPYLWLREGKTIWLLIPAAISLALFAWLLTLHPAAAGRVYAAYGGVYIFTAILWLWLVDGIRPTVWDFVGVFVALLGMAIIMFSPRPA.

Helical transmembrane passes span 7–27 (VGLF…PYLW), 33–53 (TIWL…LLTL), 63–83 (AAYG…VDGI), and 85–105 (PTVW…IIMF).

This sequence belongs to the UPF0060 family.

It is found in the cell inner membrane. This Photobacterium profundum (strain SS9) protein is UPF0060 membrane protein PBPRB0495.